The sequence spans 268 residues: Dioscorin DB3S (268 aa).

Positions Asp25–Glu259 constitute an Alpha-carbonic anhydrase domain. An intrachain disulfide couples Cys50 to Cys209. Residue His91 is the Proton acceptor of the active site. L-ascorbate-binding positions include Asp92, His117–His119, Gln136, and Thr205–Ala206.

The protein belongs to the alpha-class carbonic anhydrase family. As to quaternary structure, monomer. Homodimer. In terms of processing, not glycosylated. Expressed in tuber (at protein level).

The catalysed reaction is hydrogencarbonate + H(+) = CO2 + H2O. The enzyme catalyses 2 monodehydro-L-ascorbate radical + NADH + H(+) = 2 L-ascorbate + NAD(+). In terms of biological role, storage protein of tuber. Involved in protection against oxidative stress. Has carbonate dehydratase and weak trypsin inhibitor activity detected by measuring the dehydration of sodium bicarbonate and the inhibition of trypsin-catalyzed hydrolysis of N-benzoyl-L-arginine-4-nitro anilide, respectively. Contrarily, no carbonate dehydratase or trypsin inhibitor activity detected by measuring the hydrolysis of 4-nitrophenyl acetate or the inhibition of bovine trypsin-catalyzed hydrolysis of N-benzoyl-L-arginine ethyl ester, respectively. Has dehydroascorbate (DHA) reductase and monodehydroascorbate (MDA) reductase activities. Catalyzes the reactions of carbonate dehydratase and DHA reductase independently of zinc and glutathione (GSH). The coupled reaction is capable of recycling a plant antioxidant ascorbate using ubiquitous compounds H(2)O and CO(2). Exhibits antioxidant activity. Able to scavenge 1,1-diphenyl-2-picrylhydrazyl (DPPH) radical and hydroxyl radicals. Exhibits immunomodulatory activity. Activates Toll-like receptor 4 signaling pathways by up-regulating the gene expression of pro-inflammatory cytokines, such as tumor necrosis factor alpha, interleukin-1 beta and interleukin-6, and chemokines RANTES and MCP-1, in mouse RAW 264.7 macrophages. Stimulates the phagocytosis of E.coli by the LPS-treated mouse macrophages. The polypeptide is Dioscorin DB3S (Dioscorea polystachya (Chinese yam)).